Reading from the N-terminus, the 136-residue chain is NADPH-dependent 7-cyano-7-deazaguanine reductase (136 aa).

The active-site Thioimide intermediate is the C50. D57 acts as the Proton donor in catalysis. Substrate-binding positions include 72 to 74 (YEL) and 91 to 92 (HE).

This sequence belongs to the GTP cyclohydrolase I family. QueF type 1 subfamily.

The protein localises to the cytoplasm. It catalyses the reaction 7-aminomethyl-7-carbaguanine + 2 NADP(+) = 7-cyano-7-deazaguanine + 2 NADPH + 3 H(+). The protein operates within tRNA modification; tRNA-queuosine biosynthesis. Catalyzes the NADPH-dependent reduction of 7-cyano-7-deazaguanine (preQ0) to 7-aminomethyl-7-deazaguanine (preQ1). This chain is NADPH-dependent 7-cyano-7-deazaguanine reductase, found in Prochlorococcus marinus (strain MIT 9312).